A 100-amino-acid polypeptide reads, in one-letter code: Integration host factor subunit beta (100 aa).

Residues 81-100 (KPGKELRDRVNEDEHEEAHT) form a disordered region. Residues 82-100 (PGKELRDRVNEDEHEEAHT) are compositionally biased toward basic and acidic residues.

Belongs to the bacterial histone-like protein family. As to quaternary structure, heterodimer of an alpha and a beta chain.

This protein is one of the two subunits of integration host factor, a specific DNA-binding protein that functions in genetic recombination as well as in transcriptional and translational control. The sequence is that of Integration host factor subunit beta (ihfB) from Pseudomonas putida (Arthrobacter siderocapsulatus).